The following is a 798-amino-acid chain: Sodium/hydrogen exchanger 4 (798 aa).

At 1–13 (MALQMFVTYSPWN) the chain is on the cytoplasmic side. The segment at residues 14–28 (CLLLLVALECSEASS) is an intramembrane region (name=A/M1). Topologically, residues 29–69 (DLNESANSTAQYASNAWFAAASSEPEEGISVFELDYDYVQI) are cytoplasmic. Residues 70 to 90 (PYEVTLWILLASLAKIGFHLY) constitute an intramembrane region (name=B/M2). The Cytoplasmic portion of the chain corresponds to 91-94 (HRLP). A helical membrane pass occupies residues 95–115 (GLMPESCLLILVGALVGGIIF). At 116 to 127 (GTDHKSPPVMDS) the chain is on the extracellular side. Residues 128-148 (SIYFLYLLPPIVLEGGYFMPT) traverse the membrane as a helical segment. Topologically, residues 149-154 (RPFFEN) are cytoplasmic. A helical membrane pass occupies residues 155-175 (IGSILWWAVLGALINALGIGL). Topologically, residues 176 to 196 (SLYLICQVKAFGLGDVNLLQN) are extracellular. A helical transmembrane segment spans residues 197-217 (LLFGSLISAVDPVAVLAVFEE). Topologically, residues 218 to 226 (ARVNEQLYM) are cytoplasmic. Residues 227 to 247 (MIFGEALLNDGITVVLYNMLI) form a helical membrane-spanning segment. Residues 248–270 (AFTKMHKFEDIETVDILAGCARF) are Extracellular-facing. The helical transmembrane segment at 271–291 (IVVGLGGVLFGIVFGFISAFI) threads the bilayer. The Cytoplasmic segment spans residues 292-304 (TRFTQNISAIEPL). The helical transmembrane segment at 305 to 325 (IVFMFSYLSYLAAETLYLSGI) threads the bilayer. The Extracellular portion of the chain corresponds to 326–356 (LAITACAVTMKKYVEENVSQTSYTTIKYFMK). N-linked (GlcNAc...) asparagine glycosylation occurs at asparagine 342. A helical transmembrane segment spans residues 357–373 (MLSSVSETLIFIFMGVS). At 374–384 (TVGKNHEWNWA) the chain is on the cytoplasmic side. A helical transmembrane segment spans residues 385–405 (FICFTLAFCQIWRAISVFALF). The Extracellular segment spans residues 406 to 420 (YISNQFRTFPFSIKD). Positions 421-441 (QCIIFYSGVRGAGSFSLAFLL) form an intramembrane region, name=L. Topologically, residues 442–450 (PLSLFPRKK) are extracellular. Residues 451–471 (MFVTATLVVIYFTVFIQGITV) traverse the membrane as a helical segment. The Cytoplasmic portion of the chain corresponds to 472-798 (GPLVRYLDVK…RSHSPLLQKK (327 aa)). Disordered regions lie at residues 662 to 690 (PYGNPQSAGRDTRAAGFSDDDSSDPGSPS) and 776 to 798 (RWTADHGHGRDHHRSHSPLLQKK). Over residues 784-798 (GRDHHRSHSPLLQKK) the composition is skewed to basic residues.

This sequence belongs to the monovalent cation:proton antiporter 1 (CPA1) transporter (TC 2.A.36) family. As to quaternary structure, homodimer; each protomer has one site for sodium and one site for proton binding. Interacts with CHP1 and CHP2. In terms of processing, may be phosphorylated.

It is found in the basolateral cell membrane. Its subcellular location is the apical cell membrane. The protein localises to the zymogen granule membrane. It catalyses the reaction Na(+)(in) + H(+)(out) = Na(+)(out) + H(+)(in). The enzyme catalyses Na(+)(out) + NH4(+)(in) = Na(+)(in) + NH4(+)(out). Functionally, electroneutral antiporter that exchanges sodium for protons or ammonium ions at the basolateral membrane of epithelia to regulate cell volume and intracellular pH upon hypertonic conditions. As part of transcellular ammonia transport in renal tubules, mediates basolateral ammonium extrusion in the medullary thick ascending limb, regulating the corticopapillary ammonium gradient and overall renal acid excretion. Mediates sodium:proton exchange in gastric parietal cells secondary to cAMP-dependent acid secretion and hyperosmolarity. Possibly coupled to chloride:bicarbonate antiporter, enables loading of parietal cells with sodium and chloride ions to maintain cell volume and normal gastric acid secretion. Functions as a sodium sensor in neurons of organum vasculosum of the lamina terminalis where it regulates water intake in response to increased sodium concentration in body fluids. The polypeptide is Sodium/hydrogen exchanger 4 (SLC9A4) (Homo sapiens (Human)).